The sequence spans 117 residues: Large ribosomal subunit protein bL20c (117 aa).

The protein belongs to the bacterial ribosomal protein bL20 family.

It is found in the plastid. Its subcellular location is the chloroplast. Binds directly to 23S ribosomal RNA and is necessary for the in vitro assembly process of the 50S ribosomal subunit. It is not involved in the protein synthesizing functions of that subunit. In Morus indica (Mulberry), this protein is Large ribosomal subunit protein bL20c.